The following is a 496-amino-acid chain: Lysine--tRNA ligase (496 aa).

Mg(2+) is bound by residues Glu405 and Glu412.

It belongs to the class-II aminoacyl-tRNA synthetase family. In terms of assembly, homodimer. Requires Mg(2+) as cofactor.

Its subcellular location is the cytoplasm. The enzyme catalyses tRNA(Lys) + L-lysine + ATP = L-lysyl-tRNA(Lys) + AMP + diphosphate. The sequence is that of Lysine--tRNA ligase from Vesicomyosocius okutanii subsp. Calyptogena okutanii (strain HA).